A 368-amino-acid chain; its full sequence is tRNA-specific 2-thiouridylase MnmA (368 aa).

ATP contacts are provided by residues 10-17 and Met36; that span reads AMSGGVDS. The Nucleophile role is filled by Cys108. A disulfide bridge connects residues Cys108 and Cys206. Residue Gly132 coordinates ATP. An interaction with tRNA region spans residues 156 to 158; that stretch reads KDQ. Residue Cys206 is the Cysteine persulfide intermediate of the active site. An interaction with tRNA region spans residues 312–313; the sequence is RY.

This sequence belongs to the MnmA/TRMU family.

It is found in the cytoplasm. It carries out the reaction S-sulfanyl-L-cysteinyl-[protein] + uridine(34) in tRNA + AH2 + ATP = 2-thiouridine(34) in tRNA + L-cysteinyl-[protein] + A + AMP + diphosphate + H(+). Catalyzes the 2-thiolation of uridine at the wobble position (U34) of tRNA, leading to the formation of s(2)U34. The polypeptide is tRNA-specific 2-thiouridylase MnmA (Natranaerobius thermophilus (strain ATCC BAA-1301 / DSM 18059 / JW/NM-WN-LF)).